Here is a 626-residue protein sequence, read N- to C-terminus: Basic helix-loop-helix ARNT-like protein 1 (626 aa).

A disordered region spans residues 1–58; it reads MADQRMDISSTISDFMSPGPTDLLSSSLGTSGVDCNRKRKGSATDYQESMDTDKDDPH. A Phosphoserine; by GSK3-beta modification is found at serine 17. Over residues 17-32 the composition is skewed to low complexity; sequence SPGPTDLLSSSLGTSG. Position 21 is a phosphothreonine; by GSK3-beta (threonine 21). The Nuclear localization signal motif lies at 36–41; the sequence is NRKRKG. Residues 72-125 form the bHLH domain; it reads NAREAHSQIEKRRRDKMNSFIDELASLVPTCNAMSRKLDKLTVLRMAVQHMKTL. Serine 78 carries the post-translational modification Phosphoserine. Phosphoserine; by CK2 is present on serine 90. Residues 142-152 carry the Nuclear export signal 1 motif; it reads LSDDELKHLIL. A PAS 1 domain is found at 143–215; that stretch reads SDDELKHLIL…EQLSSSDTAP (73 aa). Lysine 252 is covalently cross-linked (Glycyl lysine isopeptide (Lys-Gly) (interchain with G-Cter in SUMO2 and SUMO3)). Lysine 259 is covalently cross-linked (Glycyl lysine isopeptide (Lys-Gly) (interchain with G-Cter in SUMO); alternate). Lysine 259 participates in a covalent cross-link: Glycyl lysine isopeptide (Lys-Gly) (interchain with G-Cter in SUMO2); alternate. The region spanning 326–396 is the PAS 2 domain; the sequence is PQPVNGEIRV…ECHRQVLQTR (71 aa). A Nuclear export signal 2 motif is present at residues 361–369; the sequence is LAYLPQELL. The 44-residue stretch at 401-444 folds into the PAC domain; that stretch reads TNCYKFKIKDGSFITLRSRWFSFMNPWTKEVEYIVSTNTVVLAN. Disordered regions lie at residues 459–492 and 511–595; these read SPHS…RAGA and GSSP…SPSN. The tract at residues 508-588 is interaction with CIART; it reads RIRGSSPSSC…IGIDMIDNDQ (81 aa). The segment covering 511–521 has biased composition (low complexity); that stretch reads GSSPSSCGSSP. The residue at position 538 (lysine 538) is an N6-acetyllysine.

In terms of assembly, component of the circadian clock oscillator which includes the CRY1/2 proteins, CLOCK or NPAS2, BMAL1 or BMAL2, CSNK1D and/or CSNK1E, TIMELESS and the PER1/2/3 proteins. Forms a heterodimer with CLOCK. The CLOCK-BMAL1 heterodimer is required for E-box-dependent transactivation, for CLOCK nuclear translocation and degradation, and, for phosphorylation of both CLOCK and BMAL1. Part of a nuclear complex which also includes RACK1 and PRKCA; RACK1 and PRKCA are recruited to the complex in a circadian manner. Interacts with NPAS2. Interacts with EZH2. Interacts with SUMO3. Interacts with SIRT1. Interacts with AHR. Interacts with ID1, ID2 and ID3. Interacts with DDX4. Interacts with OGT. Interacts with EED and SUZ12. Interacts with MTA1. Interacts with CIART. Interacts with HSP90. Interacts with KAT2B and EP300. Interacts with BHLHE40/DEC1 and BHLHE41/DEC2. Interacts with RELB and the interaction is enhanced in the presence of CLOCK. Interacts with PER1, PER2, CRY1 and CRY2 and this interaction requires a translocation to the nucleus. Interaction of the CLOCK-BMAL1 heterodimer with PER or CRY inhibits transcription activation. Interaction of the CLOCK-BMAL1 with CRY1 is independent of DNA but with PER2 is off DNA. The CLOCK-BMAL1 heterodimer interacts with GSK3B. Interacts with KDM5A. Interacts with KMT2A; in a circadian manner. Interacts with UBE3A. Interacts with PRKCG. Interacts with MAGEL2. Interacts with NCOA2. Interacts with THRAP3. The CLOCK-BMAL1 heterodimer interacts with PASD1. Interacts with PASD1. Interacts with USP9X. Interacts with PIWIL2 (via PIWI domain). Interacts with HDAC3. Interacts with HNF4A. Ubiquitinated, leading to its proteasomal degradation. Deubiquitinated by USP9X. Post-translationally, O-glycosylated; contains O-GlcNAc. O-glycosylation by OGT prevents protein degradation by inhibiting ubiquitination. It also stabilizes the CLOCK-BMAL1 heterodimer thereby increasing CLOCK-BMAL1-mediated transcription of genes in the negative loop of the circadian clock such as PER1/2/3 and CRY1/2. In terms of processing, acetylated on Lys-538 by CLOCK during the repression phase of the circadian cycle. Acetylation facilitates recruitment of CRY1 protein and initiates the repression phase of the circadian cycle. Acetylated at Lys-538 by KAT5 during the activation phase of the cycle, leading to recruitment of the positive transcription elongation factor b (P-TEFb) and BRD4, followed by productive elongation of circadian transcripts. Deacetylated by SIRT1, which may result in decreased protein stability. Phosphorylated upon dimerization with CLOCK. Phosphorylation enhances the transcriptional activity, alters the subcellular localization and decreases the stability of the CLOCK-BMAL1 heterodimer by promoting its degradation. Phosphorylation shows circadian variations in the liver with a peak between CT10 to CT14. Phosphorylation at Ser-90 by CK2 is essential for its nuclear localization, its interaction with CLOCK and controls CLOCK nuclear entry. Dephosphorylation at Ser-78 is important for dimerization with CLOCK and transcriptional activity. Post-translationally, sumoylated on Lys-259 upon dimerization with CLOCK. Predominantly conjugated to poly-SUMO2/3 rather than SUMO1 and the level of these conjugates undergo rhythmic variation, peaking at CT9-CT12. Sumoylation localizes it exclusively to the PML body and promotes its ubiquitination in the PML body, ubiquitin-dependent proteasomal degradation and the transcriptional activity of the CLOCK-BMAL1 heterodimer. In terms of processing, undergoes lysosome-mediated degradation in a time-dependent manner in the liver.

Its subcellular location is the nucleus. It localises to the cytoplasm. The protein localises to the PML body. Its function is as follows. Transcriptional activator which forms a core component of the circadian clock. The circadian clock, an internal time-keeping system, regulates various physiological processes through the generation of approximately 24 hour circadian rhythms in gene expression, which are translated into rhythms in metabolism and behavior. It is derived from the Latin roots 'circa' (about) and 'diem' (day) and acts as an important regulator of a wide array of physiological functions including metabolism, sleep, body temperature, blood pressure, endocrine, immune, cardiovascular, and renal function. Consists of two major components: the central clock, residing in the suprachiasmatic nucleus (SCN) of the brain, and the peripheral clocks that are present in nearly every tissue and organ system. Both the central and peripheral clocks can be reset by environmental cues, also known as Zeitgebers (German for 'timegivers'). The predominant Zeitgeber for the central clock is light, which is sensed by retina and signals directly to the SCN. The central clock entrains the peripheral clocks through neuronal and hormonal signals, body temperature and feeding-related cues, aligning all clocks with the external light/dark cycle. Circadian rhythms allow an organism to achieve temporal homeostasis with its environment at the molecular level by regulating gene expression to create a peak of protein expression once every 24 hours to control when a particular physiological process is most active with respect to the solar day. Transcription and translation of core clock components (CLOCK, NPAS2, BMAL1, BMAL2, PER1, PER2, PER3, CRY1 and CRY2) plays a critical role in rhythm generation, whereas delays imposed by post-translational modifications (PTMs) are important for determining the period (tau) of the rhythms (tau refers to the period of a rhythm and is the length, in time, of one complete cycle). A diurnal rhythm is synchronized with the day/night cycle, while the ultradian and infradian rhythms have a period shorter and longer than 24 hours, respectively. Disruptions in the circadian rhythms contribute to the pathology of cardiovascular diseases, cancer, metabolic syndromes and aging. A transcription/translation feedback loop (TTFL) forms the core of the molecular circadian clock mechanism. Transcription factors, CLOCK or NPAS2 and BMAL1 or BMAL2, form the positive limb of the feedback loop, act in the form of a heterodimer and activate the transcription of core clock genes and clock-controlled genes (involved in key metabolic processes), harboring E-box elements (5'-CACGTG-3') within their promoters. The core clock genes: PER1/2/3 and CRY1/2 which are transcriptional repressors form the negative limb of the feedback loop and interact with the CLOCK|NPAS2-BMAL1|BMAL2 heterodimer inhibiting its activity and thereby negatively regulating their own expression. This heterodimer also activates nuclear receptors NR1D1/2 and RORA/B/G, which form a second feedback loop and which activate and repress BMAL1 transcription, respectively. BMAL1 positively regulates myogenesis and negatively regulates adipogenesis via the transcriptional control of the genes of the canonical Wnt signaling pathway. Plays a role in normal pancreatic beta-cell function; regulates glucose-stimulated insulin secretion via the regulation of antioxidant genes NFE2L2/NRF2 and its targets SESN2, PRDX3, CCLC and CCLM. Negatively regulates the mTORC1 signaling pathway; regulates the expression of MTOR and DEPTOR. Controls diurnal oscillations of Ly6C inflammatory monocytes; rhythmic recruitment of the PRC2 complex imparts diurnal variation to chemokine expression that is necessary to sustain Ly6C monocyte rhythms. Regulates the expression of HSD3B2, STAR, PTGS2, CYP11A1, CYP19A1 and LHCGR in the ovary and also the genes involved in hair growth. Plays an important role in adult hippocampal neurogenesis by regulating the timely entry of neural stem/progenitor cells (NSPCs) into the cell cycle and the number of cell divisions that take place prior to cell-cycle exit. Regulates the circadian expression of CIART and KLF11. The CLOCK-BMAL1 heterodimer regulates the circadian expression of SERPINE1/PAI1, VWF, B3, CCRN4L/NOC, NAMPT, DBP, MYOD1, PPARGC1A, PPARGC1B, SIRT1, GYS2, F7, NGFR, GNRHR, BHLHE40/DEC1, ATF4, MTA1, KLF10 and also genes implicated in glucose and lipid metabolism. Promotes rhythmic chromatin opening, regulating the DNA accessibility of other transcription factors. The NPAS2-BMAL1 heterodimer positively regulates the expression of MAOA, F7 and LDHA and modulates the circadian rhythm of daytime contrast sensitivity by regulating the rhythmic expression of adenylate cyclase type 1 (ADCY1) in the retina. The preferred binding motif for the CLOCK-BMAL1 heterodimer is 5'-CACGTGA-3', which contains a flanking adenine nucleotide at the 3-prime end of the canonical 6-nucleotide E-box sequence. CLOCK specifically binds to the half-site 5'-CAC-3', while BMAL1 binds to the half-site 5'-GTGA-3'. The CLOCK-BMAL1 heterodimer also recognizes the non-canonical E-box motifs 5'-AACGTGA-3' and 5'-CATGTGA-3'. Essential for the rhythmic interaction of CLOCK with ASS1 and plays a critical role in positively regulating CLOCK-mediated acetylation of ASS1. Plays a role in protecting against lethal sepsis by limiting the expression of immune checkpoint protein CD274 in macrophages in a PKM2-dependent manner. Regulates the diurnal rhythms of skeletal muscle metabolism via transcriptional activation of genes promoting triglyceride synthesis (DGAT2) and metabolic efficiency (COQ10B). This Mesocricetus auratus (Golden hamster) protein is Basic helix-loop-helix ARNT-like protein 1 (BMAL1).